The primary structure comprises 507 residues: Histidine ammonia-lyase (507 aa).

Residues 141-143 (ASG) constitute a cross-link (5-imidazolinone (Ala-Gly)). Serine 142 carries the 2,3-didehydroalanine (Ser) modification.

Belongs to the PAL/histidase family. Post-translationally, contains an active site 4-methylidene-imidazol-5-one (MIO), which is formed autocatalytically by cyclization and dehydration of residues Ala-Ser-Gly.

The protein localises to the cytoplasm. It catalyses the reaction L-histidine = trans-urocanate + NH4(+). It functions in the pathway amino-acid degradation; L-histidine degradation into L-glutamate; N-formimidoyl-L-glutamate from L-histidine: step 1/3. This is Histidine ammonia-lyase from Burkholderia ambifaria (strain MC40-6).